Reading from the N-terminus, the 551-residue chain is (6-4)DNA photolyase (551 aa).

Positions 13 to 157 (AAAMVWFRKG…DVFSPVSHTL (145 aa)) constitute a Photolyase/cryptochrome alpha/beta domain. Glu254 provides a ligand contact to phosphate. FAD-binding positions include Lys255, 268 to 272 (TTVLS), 309 to 313 (QLLWR), 372 to 375 (WMHH), Arg378, 407 to 409 (DSD), and Asn413. DNA is bound at residue Trp312. The tract at residues 374–379 (HHLARH) is interaction with DNA. Trp419 is a binding site for DNA. Positions 508 to 551 (YASNRLDDDKPDKGKSSNSSRRKLSAGSQVTPNSSKTKQLKRSS) are disordered. Positions 512–522 (RLDDDKPDKGK) are enriched in basic and acidic residues. Over residues 533-544 (AGSQVTPNSSKT) the composition is skewed to polar residues.

Belongs to the DNA photolyase class-1 family. Requires FAD as cofactor.

It carries out the reaction (6-4) photoproduct (in DNA) = 2 pyrimidine residues (in DNA).. In terms of biological role, involved in repair of UV radiation-induced DNA damage. Catalyzes the photoreactivation of pyrimidine [6-4] pyrimidone photoproduct (6-4 products). The sequence is that of (6-4)DNA photolyase (UVR3) from Oryza sativa subsp. japonica (Rice).